Reading from the N-terminus, the 216-residue chain is Somatotropin (216 aa).

An N-terminal signal peptide occupies residues 1-26 (MAADSQTPWLLTFSLLCLLWPQEAGA). Histidine 45 contributes to the Zn(2+) binding site. A disulfide bridge connects residues cysteine 78 and cysteine 189. Phosphoserine is present on serine 131. Glutamate 198 contacts Zn(2+). The cysteines at positions 206 and 214 are disulfide-linked.

The protein belongs to the somatotropin/prolactin family.

The protein localises to the secreted. Functionally, plays an important role in growth control. Its major role in stimulating body growth is to stimulate the liver and other tissues to secrete IGF1. It stimulates both the differentiation and proliferation of myoblasts. It also stimulates amino acid uptake and protein synthesis in muscle and other tissues. This Rattus norvegicus (Rat) protein is Somatotropin (Gh1).